Here is a 374-residue protein sequence, read N- to C-terminus: Biotin synthase (374 aa).

One can recognise a Radical SAM core domain in the interval 49-276 (NEVQVSTLLS…KSHVRLSAGR (228 aa)). [4Fe-4S] cluster is bound by residues C64, C68, and C71. [2Fe-2S] cluster is bound by residues C108, C139, C199, and R271. Residues 344 to 374 (QQQEQAEGSNDLFIDATKPKVAAKQQHATEA) are disordered.

Belongs to the radical SAM superfamily. Biotin synthase family. As to quaternary structure, homodimer. It depends on [4Fe-4S] cluster as a cofactor. The cofactor is [2Fe-2S] cluster.

It carries out the reaction (4R,5S)-dethiobiotin + (sulfur carrier)-SH + 2 reduced [2Fe-2S]-[ferredoxin] + 2 S-adenosyl-L-methionine = (sulfur carrier)-H + biotin + 2 5'-deoxyadenosine + 2 L-methionine + 2 oxidized [2Fe-2S]-[ferredoxin]. The protein operates within cofactor biosynthesis; biotin biosynthesis; biotin from 7,8-diaminononanoate: step 2/2. Catalyzes the conversion of dethiobiotin (DTB) to biotin by the insertion of a sulfur atom into dethiobiotin via a radical-based mechanism. This is Biotin synthase from Alteromonas mediterranea (strain DSM 17117 / CIP 110805 / LMG 28347 / Deep ecotype).